The primary structure comprises 469 residues: Chromosomal replication initiator protein DnaA (469 aa).

Residues 1–71 (MKEFWQTCVS…EALAAEWYQR (71 aa)) form a domain I, interacts with DnaA modulators region. Residues 71–131 (RPVQVTFELP…DAANIVYERS (61 aa)) form a domain II region. Positions 132 to 348 (RLNTDLTFEN…GALRKVLAYA (217 aa)) are domain III, AAA+ region. Glycine 176, glycine 178, lysine 179, and threonine 180 together coordinate ATP. Positions 349–469 (RFHGRDVLTV…LHVLEQTLKG (121 aa)) are domain IV, binds dsDNA.

It belongs to the DnaA family. As to quaternary structure, oligomerizes as a right-handed, spiral filament on DNA at oriC.

It is found in the cytoplasm. Functionally, plays an essential role in the initiation and regulation of chromosomal replication. ATP-DnaA binds to the origin of replication (oriC) to initiate formation of the DNA replication initiation complex once per cell cycle. Binds the DnaA box (a 9 base pair repeat at the origin) and separates the double-stranded (ds)DNA. Forms a right-handed helical filament on oriC DNA; dsDNA binds to the exterior of the filament while single-stranded (ss)DNA is stabiized in the filament's interior. The ATP-DnaA-oriC complex binds and stabilizes one strand of the AT-rich DNA unwinding element (DUE), permitting loading of DNA polymerase. After initiation quickly degrades to an ADP-DnaA complex that is not apt for DNA replication. Binds acidic phospholipids. This is Chromosomal replication initiator protein DnaA from Bordetella parapertussis (strain 12822 / ATCC BAA-587 / NCTC 13253).